The chain runs to 1236 residues: ATP-dependent helicase/nuclease subunit A (1236 aa).

The 470-residue stretch at 4–473 folds into the UvrD-like helicase ATP-binding domain; it reads VKWTKEQQQA…VNLFKNFRSR (470 aa). Position 25-32 (25-32) interacts with ATP; it reads AAAGSGKT. The UvrD-like helicase C-terminal domain maps to 512 to 806; sequence YEDKSLVGGP…RIMSIHKSKG (295 aa).

The protein belongs to the helicase family. AddA subfamily. In terms of assembly, heterodimer of AddA and AddB/RexB. Mg(2+) is required as a cofactor.

The enzyme catalyses Couples ATP hydrolysis with the unwinding of duplex DNA by translocating in the 3'-5' direction.. It catalyses the reaction ATP + H2O = ADP + phosphate + H(+). Its function is as follows. The heterodimer acts as both an ATP-dependent DNA helicase and an ATP-dependent, dual-direction single-stranded exonuclease. Recognizes the chi site generating a DNA molecule suitable for the initiation of homologous recombination. The AddA nuclease domain is required for chi fragment generation; this subunit has the helicase and 3' -&gt; 5' nuclease activities. The polypeptide is ATP-dependent helicase/nuclease subunit A (Clostridium novyi (strain NT)).